Here is a 152-residue protein sequence, read N- to C-terminus: Ubiquitin-activating enzyme E1 Y (152 aa).

C51 serves as the catalytic Glycyl thioester intermediate.

This sequence belongs to the ubiquitin-activating E1 family. Monomer.

It catalyses the reaction ATP + ubiquitin + [E1 ubiquitin-activating enzyme]-L-cysteine = AMP + diphosphate + S-ubiquitinyl-[E1 ubiquitin-activating enzyme]-L-cysteine.. It functions in the pathway protein modification; protein ubiquitination. Activates ubiquitin by first adenylating its C-terminal glycine residue with ATP, and thereafter linking this residue to the side chain of a cysteine residue in E1, yielding a ubiquitin-E1 thioester and free AMP. The Y chromosome form could be involved in the survival and proliferation of differentiating spermatogonia. The protein is Ubiquitin-activating enzyme E1 Y (UBE1Y) of Osphranter rufus (Red kangaroo).